Here is a 125-residue protein sequence, read N- to C-terminus: Small ribosomal subunit protein bS6 (125 aa).

Positions 94–125 are disordered; sequence KAETGASSMMKTVEREEARKASQAEFAASNER. Over residues 105 to 115 the composition is skewed to basic and acidic residues; sequence TVEREEARKAS.

This sequence belongs to the bacterial ribosomal protein bS6 family.

In terms of biological role, binds together with bS18 to 16S ribosomal RNA. In Acidovorax ebreus (strain TPSY) (Diaphorobacter sp. (strain TPSY)), this protein is Small ribosomal subunit protein bS6.